Reading from the N-terminus, the 251-residue chain is Dihydroorotate dehydrogenase B (NAD(+)), electron transfer subunit homolog (251 aa).

Residues 2–101 enclose the FAD-binding FR-type domain; sequence LAELNAEVLE…FLPLGKRLFS (100 aa). [2Fe-2S] cluster is bound by residues C217, C222, C225, and C238.

It belongs to the PyrK family. [2Fe-2S] cluster is required as a cofactor. Requires FAD as cofactor.

This chain is Dihydroorotate dehydrogenase B (NAD(+)), electron transfer subunit homolog, found in Aquifex aeolicus (strain VF5).